The following is a 229-amino-acid chain: Matrix protein (229 aa).

Positions 1–10 (MSSLKKILGL) are enriched in low complexity. Residues 1–23 (MSSLKKILGLKGKGKKSKKLGIA) form a disordered region. Positions 2 to 4 (SSL) match the dynamin binding motif. The PPXY motif motif lies at 24–27 (PPPY). Residues 37-40 (PSAP) carry the PTAP/PSAP motif motif.

This sequence belongs to the vesiculoviruses matrix protein family. As to quaternary structure, homomultimer. Interacts with viral nucleocapsid; this interaction contributes to the virion assembly. Interacts with the viral envelope glycoprotein; this interaction contributes to the virion assembly. Interacts with host RAE1-NUP98 complex. Interacts with host NEDD4 and TSG101. Interacts with host dynamin. Interacts with host NDUFAF4; the interaction inhibits viral propagation and is independent of interferon activation. Interacts with host GTF2H5; the interaction may inhibit host transcription. Phosphorylated by host.

It localises to the virion. It is found in the host endomembrane system. Its subcellular location is the host nucleus membrane. The protein localises to the host nucleus. The protein resides in the host cytoplasm. In terms of biological role, forms a double layer around the helical nucleocapsid, the inner matrix layer binding to the N helix and the outer matrix layer binding to the envelope glycoprotein. Plays a major role in assembly and budding of virion, by recruiting cellular partners of the ESCRT complexes that play a key role in releasing the budding particle from the host membrane. Condensates the ribonucleocapsid core during virus assembly. Inhibits the host mRNA nuclear export thereby inducing the shut off of cellular transcription and preventing the interferon signaling and the establishment of antiviral state in infected cells. This shutoff presumably inhibits interferon signaling and thus establishment of antiviral state in virus infected cells. Induces cell-rounding, cytoskeleton disorganization and apoptosis in infected cell. Inhibits host transcription, possibly through interaction with host DNA repair factor IIH/TFIIH GTF2H5 subunit. The chain is Matrix protein (M) from Vesicular stomatitis Indiana virus (strain 85CLB South America) (VSIV).